The following is a 419-amino-acid chain: Carboxypeptidase A1 (419 aa).

Residues 1–16 form the signal peptide; it reads MQGLLILSVLLGAALG. A propeptide spans 17 to 110 (activation peptide); sequence KEDFVGHQVL…QEQMFASQSR (94 aa). Residues 121 to 414 form the Peptidase M14 domain; that stretch reads TYHTLDEIYD…LGVLTIMEHT (294 aa). The Zn(2+) site is built by H179 and E182. Substrate-binding positions include 179-182, R237, and 254-255; these read HSRE and NR. C248 and C271 form a disulfide bridge. H306 lines the Zn(2+) pocket. Substrate-binding positions include 307 to 308 and Y358; that span reads SY. Catalysis depends on E380, which acts as the Proton donor/acceptor.

The protein belongs to the peptidase M14 family. In terms of assembly, monomer. May form a complex with proelastase 2. Zn(2+) serves as cofactor. Pancreas.

The protein localises to the secreted. The enzyme catalyses Release of a C-terminal amino acid, but little or no action with -Asp, -Glu, -Arg, -Lys or -Pro.. The catalysed reaction is leukotriene C4 + H2O = leukotriene F4 + glycine. With respect to regulation, inhibited by interaction with the S.magnifica carboxypeptidase inhibitor SmCI. Carboxypeptidase that catalyzes the release of a C-terminal amino acid, but has little or no action with -Asp, -Glu, -Arg, -Lys or -Pro. Catalyzes the conversion of leukotriene C4 to leukotriene F4 via the hydrolysis of an amide bond. The sequence is that of Carboxypeptidase A1 (CPA1) from Bos taurus (Bovine).